The chain runs to 440 residues: IAA-amino acid hydrolase ILR1-like 4 (440 aa).

Positions 1-23 (MSFFKWVSFVLILHLLNPTLISC) are cleaved as a signal peptide. Residues C134, H136, E170, H194, and H397 each contribute to the Mn(2+) site. The Prevents secretion from ER motif lies at 437–440 (KDEL).

It belongs to the peptidase M20 family. It depends on Mn(2+) as a cofactor. In terms of tissue distribution, expressed in leaves, stems, roots, siliques and flowers. Detected in the vascular tissue of cotyledons and roots, in adult leaves, stems, siliques, petals, hydathodes and in silique abscission zones and funicles.

It localises to the endoplasmic reticulum lumen. It catalyses the reaction a jasmonyl-L-amino acid + H2O = a jasmonate + an L-alpha-amino acid. Functionally, hydrolyzes certain amino acid conjugates of the plant growth regulator indole-3-acetic acid (IAA), including IAA-Ala, IAA-Asn, IAA-Cys, IAA-Glu, IAA-Met, IAA-Ser and IAA-Gly. Has a lower efficiency with IAA-Phe, IAA-Leu and IAA-Val and no activity with IAA-Ile. Important for IAA-Leu hydrolysis in roots. Also hydrolyzes amino acid conjugates of jasmonic acid and 12-hydroxy jasmonic acid. The sequence is that of IAA-amino acid hydrolase ILR1-like 4 from Arabidopsis thaliana (Mouse-ear cress).